We begin with the raw amino-acid sequence, 271 residues long: Protein PXR1 (271 aa).

Residues 25–72 (TSRFGHQFLEKFGWKPGMGLGLYPMNSNTSHIKVSIKDDNVGLGAKLK) form the G-patch domain. The tract at residues 147–239 (SNAKKRKREG…SASNIPDAVN (93 aa)) is disordered. Acidic residues predominate over residues 157–168 (DDSEDEDDDDKE). Residues 175–203 (KKHKKHKKHKKDKKKDKKDKKEHKKHKKE) are compositionally biased toward basic residues. Basic and acidic residues predominate over residues 204–221 (EKRLKKEKRAEKTKETKK). Ser-230 carries the phosphoserine modification.

It belongs to the PINX1 family. As to quaternary structure, interacts with EST2.

It is found in the nucleus. It localises to the nucleolus. Its function is as follows. Involved in rRNA-processing at A0, A1 and A2 sites through its action in U18 and U24 snoRNA 3'-end final trimming. Negative regulator of telomerase throughX competition for binding to EST2 with TLC1. In Saccharomyces cerevisiae (strain YJM789) (Baker's yeast), this protein is Protein PXR1 (PXR1).